Consider the following 337-residue polypeptide: Large ribosomal subunit protein uL3 (337 aa).

The tract at residues 1–32 is disordered; that stretch reads MAKGHRPRRGSLAYSPRKRSQSHIPRFRSWPE.

The protein belongs to the universal ribosomal protein uL3 family. As to quaternary structure, part of the 50S ribosomal subunit. Forms a cluster with proteins L14 and L24e.

Its function is as follows. One of the primary rRNA binding proteins, it binds directly near the 3'-end of the 23S rRNA, where it nucleates assembly of the 50S subunit. The sequence is that of Large ribosomal subunit protein uL3 from Methanococcoides burtonii (strain DSM 6242 / NBRC 107633 / OCM 468 / ACE-M).